The following is a 299-amino-acid chain: tRNA dimethylallyltransferase (299 aa).

11–18 (GPTAVGKT) serves as a coordination point for ATP. 13–18 (TAVGKT) serves as a coordination point for substrate. The interaction with substrate tRNA stretch occupies residues 36 to 39 (DSQQ).

Belongs to the IPP transferase family. In terms of assembly, monomer. Requires Mg(2+) as cofactor.

The catalysed reaction is adenosine(37) in tRNA + dimethylallyl diphosphate = N(6)-dimethylallyladenosine(37) in tRNA + diphosphate. Catalyzes the transfer of a dimethylallyl group onto the adenine at position 37 in tRNAs that read codons beginning with uridine, leading to the formation of N6-(dimethylallyl)adenosine (i(6)A). This Streptococcus pyogenes serotype M49 (strain NZ131) protein is tRNA dimethylallyltransferase.